A 580-amino-acid polypeptide reads, in one-letter code: M-phase inducer phosphatase 2 (580 aa).

The interval 1-24 (MEVPQPEPAPGSALSPAGVCGGAQ) is disordered. Serine 42 is modified (phosphoserine). Residues 89–107 (SLSRRASESSLSSESSESS) are compositionally biased toward low complexity. Disordered regions lie at residues 89-117 (SLSR…DSPS) and 165-196 (NITN…ENDG). Phosphoserine; by MELK is present on serine 169. Serine 249 is modified (phosphoserine). Residue serine 323 is modified to Phosphoserine; by MELK and MAPK14. The tract at residues 331–370 (PILKRLERPQDRDTPVQNKRRRSVTPPEEQQEAEEPKARV) is disordered. The segment covering 334–344 (KRLERPQDRDT) has biased composition (basic and acidic residues). Serine 353 is modified (phosphoserine; by AURKA). At serine 375 the chain carries Phosphoserine; by BRSK1 and MAPK14. The Rhodanese domain occupies 431–538 (IVDKFVIVDC…FFPQHPNFCE (108 aa)). The residue at position 470 (serine 470) is a Phosphoserine. Cysteine 487 is an active-site residue. A Phosphoserine modification is found at serine 563.

This sequence belongs to the MPI phosphatase family. In terms of assembly, interacts with MAPK14 and 14-3-3 proteins. In terms of processing, phosphorylated by BRSK1 in vitro. Phosphorylated by CHEK1, which inhibits the activity of this protein. Phosphorylation at Ser-353 by AURKA might locally participate in the control of the onset of mitosis. Phosphorylation by MELK at Ser-169 promotes localization to the centrosome and the spindle poles during mitosis. Phosphorylation at Ser-323 and Ser-375 by MAPK14 is required for binding to 14-3-3 proteins.

The protein resides in the cytoplasm. It localises to the cytoskeleton. It is found in the microtubule organizing center. Its subcellular location is the centrosome. The protein localises to the spindle pole. The enzyme catalyses O-phospho-L-tyrosyl-[protein] + H2O = L-tyrosyl-[protein] + phosphate. With respect to regulation, stimulated by B-type cyclins. Its function is as follows. Tyrosine protein phosphatase which functions as a dosage-dependent inducer of mitotic progression. Directly dephosphorylates CDK1 and stimulates its kinase activity. Required for G2/M phases of the cell cycle progression and abscission during cytokinesis in a ECT2-dependent manner. The three isoforms seem to have a different level of activity. The polypeptide is M-phase inducer phosphatase 2 (CDC25B) (Homo sapiens (Human)).